A 55-amino-acid polypeptide reads, in one-letter code: Large ribosomal subunit protein bL33 (55 aa).

This sequence belongs to the bacterial ribosomal protein bL33 family.

The sequence is that of Large ribosomal subunit protein bL33 from Brucella abortus (strain S19).